The sequence spans 132 residues: Large ribosomal subunit protein bL19 (132 aa).

It belongs to the bacterial ribosomal protein bL19 family.

This protein is located at the 30S-50S ribosomal subunit interface and may play a role in the structure and function of the aminoacyl-tRNA binding site. This Rhodospirillum centenum (strain ATCC 51521 / SW) protein is Large ribosomal subunit protein bL19.